Consider the following 211-residue polypeptide: Protein YCF54, chloroplastic (211 aa).

A chloroplast-targeting transit peptide spans 1 to 80; the sequence is MWSVTGALTV…GESTKYHFLV (80 aa).

It belongs to the ycf54 family. In terms of assembly, interacts with LFNR1 and CRD1/CHL27 in chloroplasts.

It is found in the plastid. The protein resides in the chloroplast. Functionally, involved in the biosynthesis of chlorophyll; acts probably as a scaffolding factor in the MgProto monomethylester (MgProtoME) cyclase complex to stabilize CRD1/CHL27, the catalytic subunit which catalyzes the formation of a fifth isocyclic ring to tetrapyrroles to form protochlorophyllide. This chain is Protein YCF54, chloroplastic, found in Arabidopsis thaliana (Mouse-ear cress).